The following is a 186-amino-acid chain: CASP-like protein 4C2 (186 aa).

The Cytoplasmic portion of the chain corresponds to 1-31 (MRSPQPHRSGGDTQQHFQSTVSVQKLKRFNS). The helical transmembrane segment at 32 to 52 (LILVFRFAAFCFSLASAVFML) threads the bilayer. The Extracellular segment spans residues 53-71 (TNSRGSDSLHWYNFDAFRY). A helical transmembrane segment spans residues 72 to 92 (VFAANAIVAIYSLFEMAASVW). The Cytoplasmic segment spans residues 93 to 103 (EISRNATLFPE). The helical transmembrane segment at 104–124 (ICQVWFDFGHDQVFAYLLLSA) threads the bilayer. The Extracellular segment spans residues 125 to 150 (NTAGTELARTLKDTCTDNKAFCVQSD). The helical transmembrane segment at 151–171 (IAIVLGFAGFLFLGISSLFSG) threads the bilayer. At 172–186 (FRVVCFIINGSRFYV) the chain is on the cytoplasmic side.

Belongs to the Casparian strip membrane proteins (CASP) family. As to quaternary structure, homodimer and heterodimers.

The protein resides in the cell membrane. This Populus trichocarpa (Western balsam poplar) protein is CASP-like protein 4C2.